A 620-amino-acid chain; its full sequence is Coenzyme F420-dependent sulfite reductase (620 aa).

Residues 6-35 (LNEIVDSGVCARCGTCTIVCPNGILTFDER) form the 4Fe-4S ferredoxin-type 1 domain. [4Fe-4S] cluster-binding residues include Cys-15, Cys-18, Cys-21, Cys-25, Cys-428, Cys-434, Cys-468, Cys-472, Cys-495, Cys-498, Cys-501, Cys-505, Cys-524, Cys-527, Cys-530, and Cys-534. Position 472 (Cys-472) interacts with siroheme. 2 4Fe-4S ferredoxin-type domains span residues 486 to 515 (KYPK…IRGE) and 520 to 544 (NYNV…VKEE).

Belongs to the nitrite and sulfite reductase 4Fe-4S domain family. The cofactor is [4Fe-4S] cluster. Requires siroheme as cofactor.

The enzyme catalyses 3 oxidized coenzyme F420-(gamma-L-Glu)(n) + hydrogen sulfide + 3 H2O + 2 H(+) = 3 reduced coenzyme F420-(gamma-L-Glu)(n) + sulfite. Functionally, catalyzes the reduction of sulfite to sulfide using reduced F420 as the electron source. Involved in sulfite detoxification and assimilation. Cannot use NADH or NADPH. The chain is Coenzyme F420-dependent sulfite reductase from Methanocaldococcus jannaschii (strain ATCC 43067 / DSM 2661 / JAL-1 / JCM 10045 / NBRC 100440) (Methanococcus jannaschii).